We begin with the raw amino-acid sequence, 108 residues long: Tetrahydromethanopterin S-methyltransferase subunit B (108 aa).

A helical transmembrane segment spans residues 79-99 (GMFFGFWVTMAILVLVTILAV).

Belongs to the MtrB family. As to quaternary structure, the complex is composed of 8 subunits; MtrA, MtrB, MtrC, MtrD, MtrE, MtrF, MtrG and MtrH.

It is found in the cell membrane. The catalysed reaction is 5-methyl-5,6,7,8-tetrahydromethanopterin + coenzyme M + 2 Na(+)(in) = 5,6,7,8-tetrahydromethanopterin + methyl-coenzyme M + 2 Na(+)(out). It participates in one-carbon metabolism; methanogenesis from CO(2); methyl-coenzyme M from 5,10-methylene-5,6,7,8-tetrahydromethanopterin: step 2/2. Part of a complex that catalyzes the formation of methyl-coenzyme M and tetrahydromethanopterin from coenzyme M and methyl-tetrahydromethanopterin. This is an energy-conserving, sodium-ion translocating step. In Methanococcus maripaludis (strain C5 / ATCC BAA-1333), this protein is Tetrahydromethanopterin S-methyltransferase subunit B.